A 452-amino-acid polypeptide reads, in one-letter code: tRNA modification GTPase MnmE (452 aa).

3 residues coordinate (6S)-5-formyl-5,6,7,8-tetrahydrofolate: arginine 28, glutamate 85, and lysine 124. A TrmE-type G domain is found at 220 to 378 (GMNVVLVGRP…LRTELLRAAG (159 aa)). Position 230 (asparagine 230) interacts with K(+). GTP-binding positions include 230 to 235 (NVGKSS), 249 to 255 (TDVAGTT), 274 to 277 (DTAG), and 359 to 361 (SAR). Position 234 (serine 234) interacts with Mg(2+). 3 residues coordinate K(+): threonine 249, valine 251, and threonine 254. Threonine 255 is a binding site for Mg(2+). Lysine 452 is a binding site for (6S)-5-formyl-5,6,7,8-tetrahydrofolate.

The protein belongs to the TRAFAC class TrmE-Era-EngA-EngB-Septin-like GTPase superfamily. TrmE GTPase family. Homodimer. Heterotetramer of two MnmE and two MnmG subunits. It depends on K(+) as a cofactor.

The protein localises to the cytoplasm. Its function is as follows. Exhibits a very high intrinsic GTPase hydrolysis rate. Involved in the addition of a carboxymethylaminomethyl (cmnm) group at the wobble position (U34) of certain tRNAs, forming tRNA-cmnm(5)s(2)U34. In Azoarcus sp. (strain BH72), this protein is tRNA modification GTPase MnmE.